A 228-amino-acid chain; its full sequence is Delta-type opioid receptor (228 aa).

Residues 1–3 traverse the membrane as a helical segment; that stretch reads GIV. Residues 4–13 lie on the Cytoplasmic side of the membrane; sequence RYTKMKTATN. Residues 14–38 traverse the membrane as a helical segment; it reads IYIFNLALADALATSTLPFQSAKYL. The Extracellular portion of the chain corresponds to 39–50; sequence METWPFGELLCK. A disulfide bridge links C49 with C126. A helical transmembrane segment spans residues 51–72; it reads AVLSIDYYNMFTSIFTLTMMSV. Over 73 to 91 the chain is Cytoplasmic; sequence DRYIAVCHPVKALDFRTPA. The helical transmembrane segment at 92 to 114 threads the bilayer; it reads KAKLINICIWVLASGVGVPIMVM. Over 115–134 the chain is Extracellular; sequence AVTRPRDGAVVCMLQFPSPS. The chain crosses the membrane as a helical span at residues 135–166; it reads WYWDTVTKICVFLFAFVVPILVITVCYGLMLL. The Cytoplasmic segment spans residues 167–189; it reads RLRSVRLLSGSKEKDRSLRRITR. The helical transmembrane segment at 190-212 threads the bilayer; it reads MVLVVVGAFVVCWAPIHIFVIVW. The Extracellular segment spans residues 213-227; it reads TLVDIDRRDPLVVAA.

This sequence belongs to the G-protein coupled receptor 1 family. May form homooligomers. Forms a heterodimer with OPRM1. Interacts with GPRASP1. Interacts with RTP4; the interaction promotes cell surface localization of the OPRD1-OPRM1 heterodimer. In terms of processing, ubiquitinated. A basal ubiquitination seems not to be related to degradation. Ubiquitination is increased upon formation of OPRM1:OPRD1 oligomers leading to proteasomal degradation; the ubiquitination is diminished by RTP4. Detected in myenteric plexus and smooth muscle (at protein level). Detected in brain and intestine.

The protein localises to the cell membrane. Its function is as follows. G-protein coupled receptor that functions as a receptor for endogenous enkephalins and for a subset of other opioids. Ligand binding causes a conformation change that triggers signaling via guanine nucleotide-binding proteins (G proteins) and modulates the activity of down-stream effectors, such as adenylate cyclase. Signaling leads to the inhibition of adenylate cyclase activity. Inhibits neurotransmitter release by reducing calcium ion currents and increasing potassium ion conductance. Plays a role in the perception of pain and in opiate-mediated analgesia. Plays a role in developing analgesic tolerance to morphine. This is Delta-type opioid receptor (OPRD1) from Sus scrofa (Pig).